The chain runs to 214 residues: ATP phosphoribosyltransferase (214 aa).

It belongs to the ATP phosphoribosyltransferase family. Short subfamily. In terms of assembly, heteromultimer composed of HisG and HisZ subunits.

It is found in the cytoplasm. The catalysed reaction is 1-(5-phospho-beta-D-ribosyl)-ATP + diphosphate = 5-phospho-alpha-D-ribose 1-diphosphate + ATP. Its pathway is amino-acid biosynthesis; L-histidine biosynthesis; L-histidine from 5-phospho-alpha-D-ribose 1-diphosphate: step 1/9. In terms of biological role, catalyzes the condensation of ATP and 5-phosphoribose 1-diphosphate to form N'-(5'-phosphoribosyl)-ATP (PR-ATP). Has a crucial role in the pathway because the rate of histidine biosynthesis seems to be controlled primarily by regulation of HisG enzymatic activity. This is ATP phosphoribosyltransferase from Methylobacillus flagellatus (strain ATCC 51484 / DSM 6875 / VKM B-1610 / KT).